The primary structure comprises 117 residues: Large ribosomal subunit protein bL19 (117 aa).

It belongs to the bacterial ribosomal protein bL19 family.

Functionally, this protein is located at the 30S-50S ribosomal subunit interface and may play a role in the structure and function of the aminoacyl-tRNA binding site. The polypeptide is Large ribosomal subunit protein bL19 (Leptothrix cholodnii (strain ATCC 51168 / LMG 8142 / SP-6) (Leptothrix discophora (strain SP-6))).